We begin with the raw amino-acid sequence, 148 residues long: Histone H2B.1 (148 aa).

Residues 1–35 (MAPRAEKKPAEKKTAAERPVEENKAAEKAPAEKKP) show a composition bias toward basic and acidic residues. The tract at residues 1–56 (MAPRAEKKPAEKKTAAERPVEENKAAEKAPAEKKPKAGKKLPPKEAGDKKKKRSKK) is disordered. At Ala-2 the chain carries N,N,N-trimethylalanine; alternate. Residue Ala-2 is modified to N,N-dimethylalanine; alternate. Ala-2 is modified (N-methylalanine; alternate). At Lys-7 the chain carries N6-acetyllysine; partial. Position 12 is an N6-acetyllysine (Lys-12). Lys-13 is subject to N6,N6-dimethyllysine. An N6-acetyllysine mark is found at Lys-28, Lys-33, and Lys-39. At Lys-40 the chain carries N6-acetyllysine; partial. Lys-144 participates in a covalent cross-link: Glycyl lysine isopeptide (Lys-Gly) (interchain with G-Cter in ubiquitin).

It belongs to the histone H2B family. The nucleosome is a histone octamer containing two molecules each of H2A, H2B, H3 and H4 assembled in one H3-H4 heterotetramer and two H2A-H2B heterodimers. The octamer wraps approximately 147 bp of DNA. Interacts with AHL27. In terms of processing, can be acetylated to form H2BK6ac, H2BK33ac and H2BK34ac. Mono-, di- or trimethylated at the N-terminus to form H2BA1me1/2/3. H2BA1me2 may be acetylated to form H2BA1me2K6ac. Post-translationally, monoubiquitinated by BRE1 to form H2BK143ub1 and deubiquitinated by UBP26. Required for heterochromatic histone H3 di- and trimethylation at H3K4me. May give a specific tag for epigenetic transcriptional activation.

The protein resides in the nucleus. It is found in the chromosome. Functionally, core component of nucleosome. Nucleosomes wrap and compact DNA into chromatin, limiting DNA accessibility to the cellular machineries which require DNA as a template. Histones thereby play a central role in transcription regulation, DNA repair, DNA replication and chromosomal stability. DNA accessibility is regulated via a complex set of post-translational modifications of histones, also called histone code, and nucleosome remodeling. This Arabidopsis thaliana (Mouse-ear cress) protein is Histone H2B.1.